The chain runs to 449 residues: Tubulin alpha-8 chain (449 aa).

Positions 1 to 4 match the MREC motif motif; it reads MREC. The GTP site is built by glutamine 11, glutamate 71, serine 140, glycine 144, threonine 145, threonine 179, asparagine 206, and asparagine 228. Residue glutamate 71 coordinates Mg(2+). Residue glutamate 254 is part of the active site.

Belongs to the tubulin family. In terms of assembly, dimer of alpha and beta chains. A typical microtubule is a hollow water-filled tube with an outer diameter of 25 nm and an inner diameter of 15 nM. Alpha-beta heterodimers associate head-to-tail to form protofilaments running lengthwise along the microtubule wall with the beta-tubulin subunit facing the microtubule plus end conferring a structural polarity. Microtubules usually have 13 protofilaments but different protofilament numbers can be found in some organisms and specialized cells. It depends on Mg(2+) as a cofactor. Post-translationally, some glutamate residues at the C-terminus are polyglycylated, resulting in polyglycine chains on the gamma-carboxyl group. Glycylation is mainly limited to tubulin incorporated into axonemes (cilia and flagella) whereas glutamylation is prevalent in neuronal cells, centrioles, axonemes, and the mitotic spindle. Both modifications can coexist on the same protein on adjacent residues, and lowering polyglycylation levels increases polyglutamylation, and reciprocally. Cilia and flagella glycylation is required for their stability and maintenance. Flagella glycylation controls sperm motility. In terms of processing, some glutamate residues at the C-terminus are polyglutamylated, resulting in polyglutamate chains on the gamma-carboxyl group. Polyglutamylation plays a key role in microtubule severing by spastin (SPAST). SPAST preferentially recognizes and acts on microtubules decorated with short polyglutamate tails: severing activity by SPAST increases as the number of glutamates per tubulin rises from one to eight, but decreases beyond this glutamylation threshold. Glutamylation is also involved in cilia motility. The C-terminal phenylalanine residue is cleaved by MATCAP1/KIAA0895L. As to expression, expressed at highest levels in the testis, followed by skeletal and heart muscle. Expressed at low levels in the developing brain.

The protein localises to the cytoplasm. It localises to the cytoskeleton. It catalyses the reaction GTP + H2O = GDP + phosphate + H(+). Tubulin is the major constituent of microtubules, a cylinder consisting of laterally associated linear protofilaments composed of alpha- and beta-tubulin heterodimers. Microtubules grow by the addition of GTP-tubulin dimers to the microtubule end, where a stabilizing cap forms. Below the cap, tubulin dimers are in GDP-bound state, owing to GTPase activity of alpha-tubulin. The chain is Tubulin alpha-8 chain (Tuba8) from Mus musculus (Mouse).